We begin with the raw amino-acid sequence, 356 residues long: Protein pelota homolog (356 aa).

It belongs to the eukaryotic release factor 1 family. Pelota subfamily. In terms of assembly, monomer. The cofactor is a divalent metal cation.

It is found in the cytoplasm. Functionally, may function in recognizing stalled ribosomes, interact with stem-loop structures in stalled mRNA molecules, and effect endonucleolytic cleavage of the mRNA. May play a role in the release non-functional ribosomes and degradation of damaged mRNAs. Has endoribonuclease activity. The chain is Protein pelota homolog from Staphylothermus marinus (strain ATCC 43588 / DSM 3639 / JCM 9404 / F1).